The chain runs to 206 residues: Small ribosomal subunit protein uS4 (206 aa).

In terms of domain architecture, S4 RNA-binding spans 98-163; that stretch reads MRLDNIVYRL…SEKFKTFVEN (66 aa).

Belongs to the universal ribosomal protein uS4 family. Part of the 30S ribosomal subunit. Contacts protein S5. The interaction surface between S4 and S5 is involved in control of translational fidelity.

One of the primary rRNA binding proteins, it binds directly to 16S rRNA where it nucleates assembly of the body of the 30S subunit. Functionally, with S5 and S12 plays an important role in translational accuracy. This is Small ribosomal subunit protein uS4 from Clostridium beijerinckii (strain ATCC 51743 / NCIMB 8052) (Clostridium acetobutylicum).